The sequence spans 501 residues: Phenylalanine--tRNA ligase alpha subunit (501 aa).

T340 and F423 together coordinate L-phenylalanine. E425 contributes to the Mg(2+) binding site. F448 is a binding site for L-phenylalanine.

This sequence belongs to the class-II aminoacyl-tRNA synthetase family. Phe-tRNA synthetase alpha subunit type 2 subfamily. As to quaternary structure, tetramer of two alpha and two beta subunits. Mg(2+) is required as a cofactor.

It localises to the cytoplasm. It catalyses the reaction tRNA(Phe) + L-phenylalanine + ATP = L-phenylalanyl-tRNA(Phe) + AMP + diphosphate + H(+). This is Phenylalanine--tRNA ligase alpha subunit from Methanococcus maripaludis (strain C5 / ATCC BAA-1333).